A 447-amino-acid chain; its full sequence is Chitobiosyldiphosphodolichol beta-mannosyltransferase (447 aa).

The Lumenal segment spans residues 1–8 (MSVFGFDN). The helical transmembrane segment at 9–29 (IPTWLWWLLAIYLATPFVLYV) threads the bilayer. Topologically, residues 30 to 127 (VQPYLFYEGK…LCSMFWKLRA (98 aa)) are cytoplasmic. Residues 128 to 148 (VDYILLQNPPTIPILPIAVVV) constitute an intramembrane region (helical). Topologically, residues 149-447 (KTFSRAKLII…ALSELKIIHK (299 aa)) are lumenal.

It belongs to the glycosyltransferase group 1 family.

The protein resides in the endoplasmic reticulum membrane. The catalysed reaction is an N,N'-diacetylchitobiosyl-diphospho-di-trans,poly-cis-dolichol + GDP-alpha-D-mannose = a beta-D-Man-(1-&gt;4)-beta-D-GlcNAc-(1-&gt;4)-alpha-D-GlcNAc-diphospho-di-trans,poly-cis-dolichol + GDP + H(+). Its pathway is protein modification; protein glycosylation. Its function is as follows. Participates in the formation of the lipid-linked precursor oligosaccharide for N-glycosylation. Involved in assembling the dolichol-pyrophosphate-GlcNAc(2)-Man(5) intermediate on the cytoplasmic surface of the ER. The sequence is that of Chitobiosyldiphosphodolichol beta-mannosyltransferase (ALG1) from Kluyveromyces lactis (strain ATCC 8585 / CBS 2359 / DSM 70799 / NBRC 1267 / NRRL Y-1140 / WM37) (Yeast).